The following is a 314-amino-acid chain: DNA-directed RNA polymerase subunit alpha (314 aa).

Residues 1-228 (MIEIEKPKIE…EHLNIFVGLT (228 aa)) form an alpha N-terminal domain (alpha-NTD) region. The alpha C-terminal domain (alpha-CTD) stretch occupies residues 245–314 (KEKVLEMTIE…ELGLSLRKDD (70 aa)).

The protein belongs to the RNA polymerase alpha chain family. Homodimer. The RNAP catalytic core consists of 2 alpha, 1 beta, 1 beta' and 1 omega subunit. When a sigma factor is associated with the core the holoenzyme is formed, which can initiate transcription.

The catalysed reaction is RNA(n) + a ribonucleoside 5'-triphosphate = RNA(n+1) + diphosphate. Functionally, DNA-dependent RNA polymerase catalyzes the transcription of DNA into RNA using the four ribonucleoside triphosphates as substrates. The polypeptide is DNA-directed RNA polymerase subunit alpha (Geobacillus kaustophilus (strain HTA426)).